The chain runs to 155 residues: 6,7-dimethyl-8-ribityllumazine synthase (155 aa).

Residues Phe-24, 58 to 60 (AFE), and 82 to 84 (VII) contribute to the 5-amino-6-(D-ribitylamino)uracil site. Residue 87-88 (ST) participates in (2S)-2-hydroxy-3-oxobutyl phosphate binding. The Proton donor role is filled by His-90. Phe-115 contributes to the 5-amino-6-(D-ribitylamino)uracil binding site. Position 129 (Arg-129) interacts with (2S)-2-hydroxy-3-oxobutyl phosphate.

Belongs to the DMRL synthase family.

The catalysed reaction is (2S)-2-hydroxy-3-oxobutyl phosphate + 5-amino-6-(D-ribitylamino)uracil = 6,7-dimethyl-8-(1-D-ribityl)lumazine + phosphate + 2 H2O + H(+). The protein operates within cofactor biosynthesis; riboflavin biosynthesis; riboflavin from 2-hydroxy-3-oxobutyl phosphate and 5-amino-6-(D-ribitylamino)uracil: step 1/2. Functionally, catalyzes the formation of 6,7-dimethyl-8-ribityllumazine by condensation of 5-amino-6-(D-ribitylamino)uracil with 3,4-dihydroxy-2-butanone 4-phosphate. This is the penultimate step in the biosynthesis of riboflavin. The polypeptide is 6,7-dimethyl-8-ribityllumazine synthase (Chlorobium limicola (strain DSM 245 / NBRC 103803 / 6330)).